Consider the following 98-residue polypeptide: NADH-ubiquinone oxidoreductase chain 4L (98 aa).

Transmembrane regions (helical) follow at residues 1-21 (MIPTYMNIMLAFTISLLGMLI), 29-49 (SLLCLEGMMMSLFIMTTLIAL), and 61-81 (IILLVFAACEAAVGLALLVSI).

It belongs to the complex I subunit 4L family. In terms of assembly, core subunit of respiratory chain NADH dehydrogenase (Complex I) which is composed of 45 different subunits.

It is found in the mitochondrion inner membrane. The catalysed reaction is a ubiquinone + NADH + 5 H(+)(in) = a ubiquinol + NAD(+) + 4 H(+)(out). Core subunit of the mitochondrial membrane respiratory chain NADH dehydrogenase (Complex I) which catalyzes electron transfer from NADH through the respiratory chain, using ubiquinone as an electron acceptor. Part of the enzyme membrane arm which is embedded in the lipid bilayer and involved in proton translocation. The chain is NADH-ubiquinone oxidoreductase chain 4L (MT-ND4L) from Macaca ochreata (Booted macaque).